The primary structure comprises 135 residues: Small ribosomal subunit protein bS6 (135 aa).

The disordered stretch occupies residues 104–135 (FSRLDRNGHIGHDEKHPRSPSRQREDVIEGVE).

It belongs to the bacterial ribosomal protein bS6 family.

In terms of biological role, binds together with bS18 to 16S ribosomal RNA. The polypeptide is Small ribosomal subunit protein bS6 (Bartonella henselae (strain ATCC 49882 / DSM 28221 / CCUG 30454 / Houston 1) (Rochalimaea henselae)).